The following is a 156-amino-acid chain: Arginine repressor (156 aa).

This sequence belongs to the ArgR family.

Its subcellular location is the cytoplasm. The protein operates within amino-acid biosynthesis; L-arginine biosynthesis [regulation]. Regulates arginine biosynthesis genes. The polypeptide is Arginine repressor (Sodalis glossinidius (strain morsitans)).